Consider the following 607-residue polypeptide: Fatty acid amide hydrolase (607 aa).

Active-site charge relay system residues include K204 and S280. 301–304 (GGGS) provides a ligand contact to substrate. The Acyl-ester intermediate role is filled by S304.

It belongs to the amidase family. Forms homodimers.

It is found in the endoplasmic reticulum membrane. The protein localises to the cell membrane. The catalysed reaction is N-(9Z,12Z-octadecadienoyl)-ethanolamine + H2O = ethanolamine + (9Z,12Z)-octadecadienoate. Functionally, catalyzes the hydrolysis of bioactive endogenous fatty acid amides to their corresponding acids. The hydrolysis of endogenous amidated lipids terminates their participation as lipid mediators in various signaling systems. Converts a wide range of N-acylethanolamines (NAEs) to their corresponding free fatty acids and ethanolamine. In Medicago truncatula (Barrel medic), this protein is Fatty acid amide hydrolase.